The chain runs to 694 residues: Glycine--tRNA ligase beta subunit (694 aa).

Belongs to the class-II aminoacyl-tRNA synthetase family. As to quaternary structure, tetramer of two alpha and two beta subunits.

Its subcellular location is the cytoplasm. It catalyses the reaction tRNA(Gly) + glycine + ATP = glycyl-tRNA(Gly) + AMP + diphosphate. The protein is Glycine--tRNA ligase beta subunit of Shewanella denitrificans (strain OS217 / ATCC BAA-1090 / DSM 15013).